A 380-amino-acid polypeptide reads, in one-letter code: N-acetylcysteine deacetylase (380 aa).

Ni(2+) is bound by residues Cys-98, His-100, Glu-134, His-158, and His-350.

It belongs to the peptidase M20 family. A divalent metal cation is required as a cofactor.

The enzyme catalyses N-acetyl-L-cysteine + H2O = L-cysteine + acetate. The protein operates within amino-acid biosynthesis; L-cysteine biosynthesis. Probably catalyzes the deacetylation of N-acetylcysteine (NAC) to acetate and cysteine. Is involved in a S-(2-succino)cysteine (2SC) degradation pathway that allows B.subtilis to grow on 2SC as a sole sulfur source, via its metabolization to cysteine. In Bacillus subtilis (strain 168), this protein is N-acetylcysteine deacetylase.